The sequence spans 232 residues: Orotidine 5'-phosphate decarboxylase (232 aa).

Substrate contacts are provided by residues Asp13, Lys35, 62 to 71 (DLKFHDIPNT), Thr121, Arg182, Gln191, Gly211, and Arg212. Lys64 functions as the Proton donor in the catalytic mechanism.

This sequence belongs to the OMP decarboxylase family. Type 1 subfamily. Homodimer.

The enzyme catalyses orotidine 5'-phosphate + H(+) = UMP + CO2. It participates in pyrimidine metabolism; UMP biosynthesis via de novo pathway; UMP from orotate: step 2/2. Functionally, catalyzes the decarboxylation of orotidine 5'-monophosphate (OMP) to uridine 5'-monophosphate (UMP). The chain is Orotidine 5'-phosphate decarboxylase from Teredinibacter turnerae (strain ATCC 39867 / T7901).